We begin with the raw amino-acid sequence, 123 residues long: Fluoride-specific ion channel FluC (123 aa).

4 helical membrane-spanning segments follow: residues 5–25 (IIAL…YISG), 35–55 (IGTL…YGLL), 67–87 (IFLG…SYET), and 100–120 (FANI…GFIL). Residues G75 and S78 each coordinate Na(+).

It belongs to the fluoride channel Fluc/FEX (TC 1.A.43) family.

The protein localises to the cell membrane. The enzyme catalyses fluoride(in) = fluoride(out). Its activity is regulated as follows. Na(+) is not transported, but it plays an essential structural role and its presence is essential for fluoride channel function. Functionally, fluoride-specific ion channel. Important for reducing fluoride concentration in the cell, thus reducing its toxicity. The polypeptide is Fluoride-specific ion channel FluC (Pyrococcus horikoshii (strain ATCC 700860 / DSM 12428 / JCM 9974 / NBRC 100139 / OT-3)).